Here is a 250-residue protein sequence, read N- to C-terminus: NAD-dependent protein deacylase (250 aa).

Residues 1–250 enclose the Deacetylase sirtuin-type domain; that stretch reads MIVEVARVLA…VVHEVRRLLQ (250 aa). 20 to 39 serves as a coordination point for NAD(+); the sequence is GAGISAESGVPTFRGKDGLW. Substrate contacts are provided by Tyr64 and Arg67. Residue 98 to 101 coordinates NAD(+); sequence QNVD. His116 (proton acceptor) is an active-site residue. Residues Cys124, Cys127, Cys150, and Cys153 each contribute to the Zn(2+) site. Residues 190–192, 216–218, and Ala234 contribute to the NAD(+) site; these read GTS and NVE.

The protein belongs to the sirtuin family. Class III subfamily. The cofactor is Zn(2+).

The protein resides in the cytoplasm. The catalysed reaction is N(6)-acetyl-L-lysyl-[protein] + NAD(+) + H2O = 2''-O-acetyl-ADP-D-ribose + nicotinamide + L-lysyl-[protein]. It catalyses the reaction N(6)-succinyl-L-lysyl-[protein] + NAD(+) + H2O = 2''-O-succinyl-ADP-D-ribose + nicotinamide + L-lysyl-[protein]. Its function is as follows. NAD-dependent lysine deacetylase and desuccinylase that specifically removes acetyl and succinyl groups on target proteins. Modulates the activities of several proteins which are inactive in their acylated form. Deacetylates the N-terminal lysine residue of Alba, the major archaeal chromatin protein and that, in turn, increases Alba's DNA binding affinity, thereby repressing transcription. The sequence is that of NAD-dependent protein deacylase from Pyrococcus abyssi (strain GE5 / Orsay).